The primary structure comprises 376 residues: Erythronate-4-phosphate dehydrogenase (376 aa).

Residues S45 and T67 each coordinate substrate. An NAD(+)-binding site is contributed by D147. Residue R209 is part of the active site. D233 contributes to the NAD(+) binding site. E238 is a catalytic residue. H255 serves as the catalytic Proton donor. G258 is an NAD(+) binding site. Residue Y259 participates in substrate binding.

The protein belongs to the D-isomer specific 2-hydroxyacid dehydrogenase family. PdxB subfamily. As to quaternary structure, homodimer.

It is found in the cytoplasm. It carries out the reaction 4-phospho-D-erythronate + NAD(+) = (R)-3-hydroxy-2-oxo-4-phosphooxybutanoate + NADH + H(+). The protein operates within cofactor biosynthesis; pyridoxine 5'-phosphate biosynthesis; pyridoxine 5'-phosphate from D-erythrose 4-phosphate: step 2/5. Functionally, catalyzes the oxidation of erythronate-4-phosphate to 3-hydroxy-2-oxo-4-phosphonooxybutanoate. This chain is Erythronate-4-phosphate dehydrogenase, found in Shewanella sp. (strain MR-4).